Reading from the N-terminus, the 194-residue chain is Adenylate kinase isoenzyme 1 (194 aa).

Methionine 1 carries the post-translational modification N-acetylmethionine. Residue 18–23 (GSGKGT) participates in ATP binding. A Phosphoserine modification is found at serine 38. The segment at 38-67 (STGDLLRAEVSSGSARGKKLSEIMEKGQLV) is NMP. AMP-binding positions include threonine 39, arginine 44, 65 to 67 (QLV), 94 to 97 (GYPR), and glutamine 101. An LID region spans residues 131 to 141 (KRGETSGRVDD). Arginine 132 is a binding site for ATP. 2 residues coordinate AMP: arginine 138 and arginine 149. Position 177 (glycine 177) interacts with ATP.

The protein belongs to the adenylate kinase family. AK1 subfamily. Monomer. It depends on Mg(2+) as a cofactor.

The protein localises to the cytoplasm. It catalyses the reaction a ribonucleoside 5'-phosphate + ATP = a ribonucleoside 5'-diphosphate + ADP. The catalysed reaction is AMP + ATP = 2 ADP. The enzyme catalyses dAMP + ATP = dADP + ADP. It carries out the reaction dATP + AMP = dADP + ADP. It catalyses the reaction dAMP + dATP = 2 dADP. The catalysed reaction is a 2'-deoxyribonucleoside 5'-diphosphate + ATP = a 2'-deoxyribonucleoside 5'-triphosphate + ADP. The enzyme catalyses a ribonucleoside 5'-diphosphate + ATP = a ribonucleoside 5'-triphosphate + ADP. It carries out the reaction CDP + GTP = CTP + GDP. It catalyses the reaction GDP + ATP = GTP + ADP. The catalysed reaction is UDP + ATP = UTP + ADP. The enzyme catalyses GTP + UDP = UTP + GDP. It carries out the reaction dTDP + GTP = dTTP + GDP. It catalyses the reaction dCDP + GTP = dCTP + GDP. The catalysed reaction is dGDP + ATP = dGTP + ADP. The enzyme catalyses dADP + GTP = dATP + GDP. It carries out the reaction thiamine diphosphate + ADP = thiamine triphosphate + AMP. In terms of biological role, catalyzes the reversible transfer of the terminal phosphate group between ATP and AMP. Also displays broad nucleoside diphosphate kinase activity. Plays an important role in cellular energy homeostasis and in adenine nucleotide metabolism. Also catalyzes at a very low rate the synthesis of thiamine triphosphate (ThTP) from thiamine diphosphate (ThDP) and ADP. The sequence is that of Adenylate kinase isoenzyme 1 from Oryctolagus cuniculus (Rabbit).